Consider the following 273-residue polypeptide: Hydroxyethylthiazole kinase (273 aa).

Residue M47 coordinates substrate. R123 and T169 together coordinate ATP. A substrate-binding site is contributed by G196.

This sequence belongs to the Thz kinase family. Requires Mg(2+) as cofactor.

The catalysed reaction is 5-(2-hydroxyethyl)-4-methylthiazole + ATP = 4-methyl-5-(2-phosphooxyethyl)-thiazole + ADP + H(+). It functions in the pathway cofactor biosynthesis; thiamine diphosphate biosynthesis; 4-methyl-5-(2-phosphoethyl)-thiazole from 5-(2-hydroxyethyl)-4-methylthiazole: step 1/1. Its function is as follows. Catalyzes the phosphorylation of the hydroxyl group of 4-methyl-5-beta-hydroxyethylthiazole (THZ). The protein is Hydroxyethylthiazole kinase of Desulfotalea psychrophila (strain LSv54 / DSM 12343).